The primary structure comprises 782 residues: Small RNA degrading nuclease 3 (782 aa).

An Exonuclease domain is found at 145-296 (MLSIDCEMVT…HDAAAAMKLV (152 aa)). An RRM 1 domain is found at 331-410 (AQLFLHKIPH…KKAVLKLSSG (80 aa)). The segment at 426–464 (PCEISTSERARAEENNVSSKRQKTEDETEETKEATVNQR) is disordered. One can recognise an RRM 2 domain in the interval 469–549 (TKLFLHKIPH…KMVVFKLSSG (81 aa)). Positions 563–605 (DSPGEISTTKRARTEESNMSSKRQKTEDESEETKEANAKQREA) are disordered. A coiled-coil region spans residues 577–605 (EESNMSSKRQKTEDESEETKEANAKQREA). Residues 595–605 (TKEANAKQREA) are compositionally biased toward basic and acidic residues. Residues 608-688 (TKLLLHKIPL…KMVAFKLSSG (81 aa)) enclose the RRM 3 domain. A coiled-coil region spans residues 709-779 (ANANHCEDDH…KMKLEKKQSK (71 aa)).

This sequence belongs to the REXO1/REXO3 family. Associated with the Mediator complex.

The protein resides in the nucleus. Its function is as follows. 3'-5' exonuclease degrading single-stranded small RNAs. This is Small RNA degrading nuclease 3 (SDN3) from Arabidopsis thaliana (Mouse-ear cress).